The sequence spans 598 residues: Arylsulfate sulfotransferase AssT (598 aa).

A signal peptide spans 1-27 (MFDKYRKTLVAGTVAITLGLSASGVMA). Residues H279 and H383 each contribute to the 4-methylumbelliferone site. A disulfide bridge connects residues C445 and C451. A 4-methylumbelliferone-binding site is contributed by H463. Residue H463 is the Nucleophile; sulfurylated histidine covalent intermediate of the active site.

The protein belongs to the aryl sulfotransferase family. As to quaternary structure, homodimer. The disulfide bond is crucial for enzyme activity.

The protein resides in the periplasm. The catalysed reaction is an aryl sulfate + a phenol = an aryl sulfate + a phenol. It catalyses the reaction 4-methylumbelliferone sulfate + phenol = phenyl sulfate + 4-methylumbelliferone. Functionally, catalyzes the transfer of a sulfate group from a phenyl sulfate ester to other phenolic compounds. In vitro, is able to use 4-methylumbelliferyl sulfate and p-nitrophenyl sulfate (PNS) as donor substrates with phenol as the acceptor substrate. Cannot use 3'-phosphoadenosine-5'-phophosulfate (PAPS), the donor substrate of mammalian sulfotransferase. The polypeptide is Arylsulfate sulfotransferase AssT (Escherichia coli O6:H1 (strain CFT073 / ATCC 700928 / UPEC)).